Consider the following 149-residue polypeptide: D-aminoacyl-tRNA deacylase (149 aa).

The Gly-cisPro motif, important for rejection of L-amino acids signature appears at 137–138; that stretch reads GP.

Belongs to the DTD family. As to quaternary structure, homodimer.

It is found in the cytoplasm. It catalyses the reaction glycyl-tRNA(Ala) + H2O = tRNA(Ala) + glycine + H(+). The catalysed reaction is a D-aminoacyl-tRNA + H2O = a tRNA + a D-alpha-amino acid + H(+). Functionally, an aminoacyl-tRNA editing enzyme that deacylates mischarged D-aminoacyl-tRNAs. Also deacylates mischarged glycyl-tRNA(Ala), protecting cells against glycine mischarging by AlaRS. Acts via tRNA-based rather than protein-based catalysis; rejects L-amino acids rather than detecting D-amino acids in the active site. By recycling D-aminoacyl-tRNA to D-amino acids and free tRNA molecules, this enzyme counteracts the toxicity associated with the formation of D-aminoacyl-tRNA entities in vivo and helps enforce protein L-homochirality. The chain is D-aminoacyl-tRNA deacylase from Clostridium botulinum (strain Loch Maree / Type A3).